Consider the following 99-residue polypeptide: uncharacterized protein (99 aa).

The helical transmembrane segment at 76–96 (VLLGLASGMIGGIIGMFMWVL) threads the bilayer.

The protein localises to the host membrane. This is an uncharacterized protein from Haemophilus phage HP1 (strain HP1c1) (Bacteriophage HP1).